A 379-amino-acid polypeptide reads, in one-letter code: Carboxypeptidase Y-deficient protein 8 (379 aa).

Over residues 84-107 (HGSGNSSSKKVTSSTSSSSSNGSV) the composition is skewed to low complexity. Residues 84–108 (HGSGNSSSKKVTSSTSSSSSNGSVD) are disordered. Serine 216 is subject to Phosphoserine.

Belongs to the VPS26 family. In terms of assembly, component of the retromer complex which consists of VPS29, VPS26, VPS35, VPS5 and VPS17. Component of a retromer subcomplex consisting of VPS29, VPS26 and VPS35.

Plays a role in vesicular protein sorting. Required for the endosome-to-Golgi retrieval of the vacuolar protein sorting receptor VPS10. Component of the membrane-associated retromer complex which is essential in endosome-to-Golgi retrograde transport. The VPS29-VPS26-VPS35 subcomplex may be involved in cargo selection. This chain is Carboxypeptidase Y-deficient protein 8 (PEP8), found in Saccharomyces cerevisiae (strain ATCC 204508 / S288c) (Baker's yeast).